The sequence spans 43 residues: ORF7b protein (43 aa).

A helical membrane pass occupies residues 9 to 29; it reads FYLCFLAFLLFLVLIMLIIFW.

It is found in the host Golgi apparatus membrane. It localises to the host endosome membrane. In Homo sapiens (Human), this protein is ORF7b protein.